The chain runs to 513 residues: Histidine ammonia-lyase (513 aa).

Residues 142–144 (ASG) constitute a cross-link (5-imidazolinone (Ala-Gly)). The residue at position 143 (Ser143) is a 2,3-didehydroalanine (Ser).

Belongs to the PAL/histidase family. In terms of processing, contains an active site 4-methylidene-imidazol-5-one (MIO), which is formed autocatalytically by cyclization and dehydration of residues Ala-Ser-Gly.

The protein localises to the cytoplasm. The enzyme catalyses L-histidine = trans-urocanate + NH4(+). The protein operates within amino-acid degradation; L-histidine degradation into L-glutamate; N-formimidoyl-L-glutamate from L-histidine: step 1/3. The sequence is that of Histidine ammonia-lyase from Roseobacter denitrificans (strain ATCC 33942 / OCh 114) (Erythrobacter sp. (strain OCh 114)).